A 316-amino-acid polypeptide reads, in one-letter code: Oligopeptide transport system permease protein AppB (316 aa).

The next 6 membrane-spanning stretches (helical) occupy residues 10 to 30 (LMSI…MKAA), 100 to 120 (LLLM…FGVL), 138 to 158 (FIGL…VLSV), 177 to 197 (IFDR…ADMA), 240 to 260 (LPVI…SVVV), and 290 to 310 (VISA…YAIV). Positions 96–303 (LPNTLLLMLV…VLVVVGNLIA (208 aa)) constitute an ABC transmembrane type-1 domain.

The protein belongs to the binding-protein-dependent transport system permease family. OppBC subfamily.

The protein resides in the cell membrane. Its function is as follows. This protein is a component of an oligopeptide permease, a binding protein-dependent transport system. This APP system can completely substitute for the OPP system in both sporulation and genetic competence, though, unlike OPP, is incapable of transporting tripeptides. Probably responsible for the translocation of the substrate across the membrane. The sequence is that of Oligopeptide transport system permease protein AppB (appB) from Bacillus subtilis (strain 168).